A 5073-amino-acid polypeptide reads, in one-letter code: Malformin synthetase mlfA (5073 aa).

The segment at glutamate 194–leucine 585 is adenylation 1. Residues serine 726–glutamate 799 enclose the Carrier 1 domain. O-(pantetheine 4'-phosphoryl)serine is present on serine 760. The tract at residues glutamate 837–alanine 1268 is condensation 1. An adenylation 2 region spans residues aspartate 1296 to arginine 1685. The 78-residue stretch at threonine 1823–alanine 1900 folds into the Carrier 2 domain. The residue at position 1860 (serine 1860) is an O-(pantetheine 4'-phosphoryl)serine. Disordered stretches follow at residues glycine 1901 to aspartate 1930 and glycine 1963 to lysine 1984. 2 stretches are compositionally biased toward low complexity: residues serine 1903–aspartate 1927 and serine 1965–serine 1982. The interval glutamate 2031 to leucine 2446 is condensation 2. The segment at serine 2469–leucine 2861 is adenylation 3. In terms of domain architecture, Carrier 3 spans arginine 2997 to arginine 3073. The residue at position 3034 (serine 3034) is an O-(pantetheine 4'-phosphoryl)serine. Condensation regions lie at residues tryptophan 3090–glutamine 3555 and aspartate 3576–valine 3995. The adenylation 4 stretch occupies residues histidine 4020–phenylalanine 4410. Residues methionine 4544–asparagine 4620 form the Carrier 4 domain. At serine 4581 the chain carries O-(pantetheine 4'-phosphoryl)serine. The interval aspartate 4611–glycine 4633 is disordered. Polar residues predominate over residues arginine 4617–serine 4631. The interval aspartate 4657 to asparagine 4991 is condensation 5.

It belongs to the NRP synthetase family.

Its pathway is secondary metabolite biosynthesis. Nonribosomal peptide synthetase; part of the gene cluster that mediates the biosynthesis of malformins, cyclic pentapeptides with a disulfide bond between 2 consecutive cysteins, that show potential anti-tumor as well as antimalarial and antitrypanosomal properties. The nonribosomal peptide synthetase mlfA is responsible of the formation of the cyclic pentapeptide. The malformin biosynthesis clusters in malformin-producing fungi also contain enzymes involved in the formation of the disulfide bond between the two consecutive cysteins within malformins, in addition to additional tailoring enzymes such as methyltransferases or oxidoreductases. They are also composed of up to 4 major facilitator superfamily transporters, and transcription factors probably involved in the regulation of the expression of those clusters. In Aspergillus tubingensis (strain CBS 134.48), this protein is Malformin synthetase mlfA.